The following is a 377-amino-acid chain: Compound eye opsin BCRH1 (377 aa).

Over M1 to W53 the chain is Extracellular. Residue N3 is glycosylated (N-linked (GlcNAc...) asparagine). The helical transmembrane segment at H54 to L78 threads the bilayer. At Y79–N90 the chain is on the cytoplasmic side. Residues M91–C115 form a helical membrane-spanning segment. Residues F116–Y131 lie on the Extracellular side of the membrane. The cysteines at positions 128 and 205 are disulfide-linked. Residues A132–F151 traverse the membrane as a helical segment. The Cytoplasmic segment spans residues D152–K170. Residues A171–G194 form a helical membrane-spanning segment. Over S195–T218 the chain is Extracellular. The helical transmembrane segment at Y219–I246 threads the bilayer. Residues F247–K281 are Cytoplasmic-facing. Residues T282–L305 traverse the membrane as a helical segment. The Extracellular segment spans residues L306–T313. Residues P314 to S338 form a helical membrane-spanning segment. K325 bears the N6-(retinylidene)lysine mark. Topologically, residues H339–S377 are cytoplasmic.

The protein belongs to the G-protein coupled receptor 1 family. Opsin subfamily. Post-translationally, phosphorylated on some or all of the serine and threonine residues present in the C-terminal region. Expressed in all of the seven retinular cells (R1-R7) forming the main rhabdom in each ommatidium.

It is found in the membrane. In terms of biological role, visual pigments are the light-absorbing molecules that mediate vision. They consist of an apoprotein, opsin, covalently linked to cis-retinal. This opsin produces visual pigments with maximal absorption in the blue-green region of the spectrum. This Hemigrapsus sanguineus (Asian shore crab) protein is Compound eye opsin BCRH1.